The primary structure comprises 940 residues: MSDYKSTLNLPETEFPMRGNLANREPVMLKSWAEDDLYQQIRDSRIGRKPFILHDGPPYANGSIHIGHSVNKILKDIIVKSKTMSGFDAPYIPGWDCHGLPIELKVEQKVGKPGHKVTAAEFRVKCREYAAKQVDGQRDDFMRLGVFGDWHNPYLTMDYSTEANIVRSLSKVIDSGHLHKGVKPVHWCTECGSALAEAEVEYEDKKSPAIDVAFAAADKVTLLAKFGVEECSGSVSMVIWTTTPWTLPANRALSVAGDIEYALVEFVKGDKTSSVILAETLVESCMERYGVDSHNVLGKTSGQSLELLRFNHPFYDFDVPVILGEHVTVDSGTGVVHTAPGHGQDDFVVGQKYGLEVANPVGDNGVYKSDTEIFAGQHVFKANDNVVALLEEKGALIKLENILHSYPHCWRHKTPIIFRATPQWFISMEQKGLRKQALNEIEQTQWIPDWGQSRIEKMVENRPDWCISRQRTWGVPIALFVHRETEELHPDSSSLMERVANKIEQEGIQAWWDLDAAELLGEEADQYRKVTDTLDVWYDSGSSFSSVVASRPEFQGHDIDLYLEGSDQHRGWFMSSLMISTAMNGKAPYKQVLTHGFTVDGNGRKMSKSVGNVIAPQTVTNKLGADILRLWVAATDYSGEMTVSDEILKRSADAYRRIRNTARFLLANINGFNPETDLVAVEEMVALDRWAVRRAAALQEELLEAYEQYNFHVVTQKLMQFCSVELGSFYLDIIKDRQYTAKGDSHARRSCQSALYLISEAMVRWIAPILSFTADEVWQLLPGQRDKYVFTQEWFQGLKSVTLESDLSDDFWSELLTVRGEVNKVIEQARREKQVGGSLEAEITLYADDALSTALATLGDELRFVLLTSKTQILDLSAAPADAIETELSSLKLGLKKAETEKCERCWHHREDVGQVATHPTLCTRCVTNIEGDGEVRQFA.

Residues 58–68 (PYANGSIHIGH) carry the 'HIGH' region motif. An L-isoleucyl-5'-AMP-binding site is contributed by glutamate 564. The 'KMSKS' region signature appears at 605 to 609 (KMSKS). ATP is bound at residue lysine 608. Zn(2+)-binding residues include cysteine 903, cysteine 906, cysteine 923, and cysteine 926.

Belongs to the class-I aminoacyl-tRNA synthetase family. IleS type 1 subfamily. Monomer. Zn(2+) is required as a cofactor.

Its subcellular location is the cytoplasm. The enzyme catalyses tRNA(Ile) + L-isoleucine + ATP = L-isoleucyl-tRNA(Ile) + AMP + diphosphate. Catalyzes the attachment of isoleucine to tRNA(Ile). As IleRS can inadvertently accommodate and process structurally similar amino acids such as valine, to avoid such errors it has two additional distinct tRNA(Ile)-dependent editing activities. One activity is designated as 'pretransfer' editing and involves the hydrolysis of activated Val-AMP. The other activity is designated 'posttransfer' editing and involves deacylation of mischarged Val-tRNA(Ile). This Shewanella woodyi (strain ATCC 51908 / MS32) protein is Isoleucine--tRNA ligase.